We begin with the raw amino-acid sequence, 295 residues long: Acetylglutamate kinase (295 aa).

Substrate contacts are provided by residues 66 to 67, Arg88, and Asn193; that span reads GG.

Belongs to the acetylglutamate kinase family. ArgB subfamily.

It localises to the cytoplasm. It carries out the reaction N-acetyl-L-glutamate + ATP = N-acetyl-L-glutamyl 5-phosphate + ADP. The protein operates within amino-acid biosynthesis; L-arginine biosynthesis; N(2)-acetyl-L-ornithine from L-glutamate: step 2/4. Functionally, catalyzes the ATP-dependent phosphorylation of N-acetyl-L-glutamate. This chain is Acetylglutamate kinase, found in Rhizobium johnstonii (strain DSM 114642 / LMG 32736 / 3841) (Rhizobium leguminosarum bv. viciae).